Reading from the N-terminus, the 339-residue chain is tRNA N6-adenosine threonylcarbamoyltransferase (339 aa).

The Fe cation site is built by His114 and His118. Residues 137–141 (VVSGG), Asp170, Gly183, Asp187, and Asn277 each bind substrate. Fe cation is bound at residue Asp305.

Belongs to the KAE1 / TsaD family. Fe(2+) is required as a cofactor.

Its subcellular location is the cytoplasm. The catalysed reaction is L-threonylcarbamoyladenylate + adenosine(37) in tRNA = N(6)-L-threonylcarbamoyladenosine(37) in tRNA + AMP + H(+). Its function is as follows. Required for the formation of a threonylcarbamoyl group on adenosine at position 37 (t(6)A37) in tRNAs that read codons beginning with adenine. Is involved in the transfer of the threonylcarbamoyl moiety of threonylcarbamoyl-AMP (TC-AMP) to the N6 group of A37, together with TsaE and TsaB. TsaD likely plays a direct catalytic role in this reaction. The polypeptide is tRNA N6-adenosine threonylcarbamoyltransferase (Clostridium beijerinckii (strain ATCC 51743 / NCIMB 8052) (Clostridium acetobutylicum)).